The primary structure comprises 89 residues: Small ribosomal subunit protein uS15 (89 aa).

The tract at residues 1–22 (MPLSKEQKQEVMEKYKLHEHDT) is disordered.

This sequence belongs to the universal ribosomal protein uS15 family. Part of the 30S ribosomal subunit. Forms a bridge to the 50S subunit in the 70S ribosome, contacting the 23S rRNA.

Its function is as follows. One of the primary rRNA binding proteins, it binds directly to 16S rRNA where it helps nucleate assembly of the platform of the 30S subunit by binding and bridging several RNA helices of the 16S rRNA. Functionally, forms an intersubunit bridge (bridge B4) with the 23S rRNA of the 50S subunit in the ribosome. The polypeptide is Small ribosomal subunit protein uS15 (Natranaerobius thermophilus (strain ATCC BAA-1301 / DSM 18059 / JW/NM-WN-LF)).